A 175-amino-acid chain; its full sequence is MGKITFYEDRGFQGHCYECSSDCPNLQPYFSRCNSIRVDSGCWMLYERPNYQGHQYFLRRGDYPDYQQWMGFNDSIRSCRLIPQHTGTFRMRIYERDDFRGQMSEITDDCPSLQDRFHLTEVHSLNVLEGSWVLYEMPSYRGRQYLLRPGEYRRYLDWGAMNAKVGSLRRVMDFY.

Beta/gamma crystallin 'Greek key' domains are found at residues 2-40 and 41-83; these read GKIT…RVDS and GCWM…RLIP. An N-linked (Glc) (glycation) lysine; in vitro glycan is attached at lysine 3. A disulfide bridge connects residues cysteine 19 and cysteine 23. The connecting peptide stretch occupies residues 84-88; it reads QHTGT. Beta/gamma crystallin 'Greek key' domains are found at residues 89–129 and 130–172; these read FRMR…NVLE and GSWV…RRVM.

This sequence belongs to the beta/gamma-crystallin family.

Its function is as follows. Crystallins are the dominant structural components of the vertebrate eye lens. The polypeptide is Gamma-crystallin B (CRYGB) (Bos taurus (Bovine)).